A 316-amino-acid polypeptide reads, in one-letter code: MIFIPIIILIYLVSIAASDKSPKIKKNPRNVVAVADFPFGGDTQVKGNVVFSAKEGKHVNVHIDMTGLPKDEGPFFYHIHERSVPGNGNCEAVGLHFNPYNASPVCDEQKNDAYCQVGDLSGKHGCINTTCFELKYSDPYLSLNRKSKSYIIGKSVVFHYPNLTKIACADIEEANELRLQSLIDEYTQTDDAIQLKELNTPLETDYKFDEVEALSSEIYHSDTDSDPPQQELISTEKLYNKTDNVYSPEETRPSDQNKKSHRHSLLPLAKWKKNSPKNYSNISIHGISSDCLNDGMMVTGSVFGSLVLGIAAGIFV.

The first 18 residues, 1–18 (MIFIPIIILIYLVSIAAS), serve as a signal peptide directing secretion. Residues His78, His80, and His96 each coordinate Cu cation. Positions 96 and 119 each coordinate Zn(2+). Asn128 carries an N-linked (GlcNAc...) asparagine glycan. Cu cation is bound at residue His159. N-linked (GlcNAc...) asparagine glycans are attached at residues Asn162 and Asn240. Residues 243-263 (DNVYSPEETRPSDQNKKSHRH) are disordered. Positions 249–258 (EETRPSDQNK) are enriched in basic and acidic residues. Asn278 and Asn281 each carry an N-linked (GlcNAc...) asparagine glycan. Ser288 carries the GPI-anchor amidated serine lipid modification. Positions 289 to 316 (SDCLNDGMMVTGSVFGSLVLGIAAGIFV) are cleaved as a propeptide — removed in mature form.

This sequence belongs to the Cu-Zn superoxide dismutase family. Requires Cu cation as cofactor. The cofactor is Zn(2+). In terms of processing, the GPI-anchor is attached to the protein in the endoplasmic reticulum and serves to target the protein to the cell surface. There, the glucosamine-inositol phospholipid moiety is cleaved off and the GPI-modified mannoprotein is covalently attached via its lipidless GPI glycan remnant to the 1,6-beta-glucan of the outer cell wall layer.

It is found in the secreted. The protein localises to the cell wall. The protein resides in the membrane. The catalysed reaction is 2 superoxide + 2 H(+) = H2O2 + O2. Superoxide dismutases serve to convert damaging superoxide radicals, a key form of ROS, to less damaging hydrogen peroxide that can be converted into water by catalase action. May be involved protection against extracellular stress. The chain is Cell surface superoxide dismutase [Cu-Zn] 6 (SOD6) from Candida albicans (strain SC5314 / ATCC MYA-2876) (Yeast).